A 423-amino-acid polypeptide reads, in one-letter code: Glutamate-1-semialdehyde 2,1-aminomutase (423 aa).

An N6-(pyridoxal phosphate)lysine modification is found at Lys259.

Belongs to the class-III pyridoxal-phosphate-dependent aminotransferase family. HemL subfamily. Homodimer. The cofactor is pyridoxal 5'-phosphate.

Its subcellular location is the cytoplasm. It catalyses the reaction (S)-4-amino-5-oxopentanoate = 5-aminolevulinate. It participates in porphyrin-containing compound metabolism; protoporphyrin-IX biosynthesis; 5-aminolevulinate from L-glutamyl-tRNA(Glu): step 2/2. The chain is Glutamate-1-semialdehyde 2,1-aminomutase from Thermosipho africanus (strain TCF52B).